We begin with the raw amino-acid sequence, 434 residues long: Glutamyl-tRNA reductase (434 aa).

Residues 49-52 (TCNR), S109, 114-116 (EPQ), and Q120 contribute to the substrate site. C50 serves as the catalytic Nucleophile. 189–194 (GAGEMC) provides a ligand contact to NADP(+).

It belongs to the glutamyl-tRNA reductase family. As to quaternary structure, homodimer.

It catalyses the reaction (S)-4-amino-5-oxopentanoate + tRNA(Glu) + NADP(+) = L-glutamyl-tRNA(Glu) + NADPH + H(+). The protein operates within porphyrin-containing compound metabolism; protoporphyrin-IX biosynthesis; 5-aminolevulinate from L-glutamyl-tRNA(Glu): step 1/2. Catalyzes the NADPH-dependent reduction of glutamyl-tRNA(Glu) to glutamate 1-semialdehyde (GSA). The protein is Glutamyl-tRNA reductase of Citrifermentans bemidjiense (strain ATCC BAA-1014 / DSM 16622 / JCM 12645 / Bem) (Geobacter bemidjiensis).